A 1251-amino-acid chain; its full sequence is Myosin-1 (1251 aa).

The interval 1 to 37 (MGQSKRPFKNKEEKKSRGFGRSRHDDAGAGGRPQVKK) is disordered. Over residues 9-27 (KNKEEKKSRGFGRSRHDDA) the composition is skewed to basic and acidic residues. A Myosin motor domain is found at 48-727 (IGVSDLTLLS…TLFALEHMRD (680 aa)). Position 141-148 (141-148 (GESGAGKT)) interacts with ATP. At Ser-369 the chain carries Phosphoserine. An actin-binding region spans residues 416–498 (TIGILDIYGF…PGVFAALNDA (83 aa)). 2 consecutive IQ domains span residues 731-751 (HNMA…RTEC) and 752-777 (AIRI…QGHK). One can recognise a TH1 domain in the interval 785–980 (RRRYSLVGSR…PGEPANSVSK (196 aa)). Disordered regions lie at residues 958–1093 (RDDV…SNEL) and 1135–1227 (AKTP…ASIA). Low complexity predominate over residues 1040-1052 (VAQSVTAVAAAHA). Pro residues predominate over residues 1061-1073 (RPPPPPPPTQPPA). One can recognise an SH3 domain in the interval 1074-1135 (PKKDTAKALY…PEAYLEPIVA (62 aa)). The segment covering 1139-1148 (SLPPPPPSLP) has biased composition (pro residues). 2 stretches are compositionally biased toward polar residues: residues 1150-1161 (QSKSAVSNTLPN) and 1216-1225 (ATPSSLSNAS).

The protein belongs to the TRAFAC class myosin-kinesin ATPase superfamily. Myosin family. In terms of processing, phosphorylation of the TEDS site (Ser-369) is required for the polarization of the actin cytoskeleton. Phosphorylation probably activates the myosin-I ATPase activity.

The protein localises to the cytoplasm. Its subcellular location is the cytoskeleton. The protein resides in the actin patch. Its function is as follows. Type-I myosin implicated in the organization of the actin cytoskeleton. Required for proper actin cytoskeleton polarization. At the cell cortex, assembles in patch-like structures together with proteins from the actin-polymerizing machinery and promotes actin assembly. Functions as actin nucleation-promoting factor (NPF) for the Arp2/3 complex. The chain is Myosin-1 (MYO1) from Coccidioides immitis (strain RS) (Valley fever fungus).